Here is a 654-residue protein sequence, read N- to C-terminus: Pyoverdine export ATP-binding/permease protein PvdT (654 aa).

Positions 6–245 constitute an ABC transporter domain; that stretch reads IELCDIRKAY…QPEQLQANDL (240 aa). 43–50 provides a ligand contact to ATP; the sequence is GASGSGKS. The next 4 helical transmembrane spans lie at 282–302, 529–549, 596–616, and 617–637; these read ALTL…LAVG, LSLM…IGVM, IVIA…VAFA, and LPAI…FGFM.

This sequence belongs to the ABC transporter superfamily. Macrolide exporter (TC 3.A.1.122) family. Part of the tripartite efflux system PvdRT-OpmQ, which is composed of an inner membrane component with both ATPase and permease domains, PvdT, a periplasmic membrane fusion protein, PvdR, and an outer membrane component, OpmQ.

It is found in the cell inner membrane. Part of the tripartite efflux system PvdRT-OpmQ required for the secretion into the extracellular milieu of the siderophore pyoverdine (PVD), which is involved in iron acquisition. This subunit binds PVD and drives its secretion by hydrolyzing ATP. The system is responsible for export of newly synthesized PVD after the final steps of biosynthesis have taken place in the periplasm. It is also responsible for recycling of PVD after internalization of ferri-PVD into the periplasm by the outer-membrane receptor FpvA and release of iron from PVD, thus making PVD available for new cycles of iron uptake. This Pseudomonas entomophila (strain L48) protein is Pyoverdine export ATP-binding/permease protein PvdT.